The sequence spans 398 residues: Autophagy-related protein 39 (398 aa).

The ATG8-binding motif lies at 8 to 11; it reads WNLV. Positions 15-50 are disordered; that stretch reads RLRKGREGEEQSSKSEISLDSLHESSFAGEDDEDFD. Positions 52-59 match the ATG11-binding motif; sequence DVLSNTSS. Residues 148–164 form a helical membrane-spanning segment; sequence VIMLSSLLSMTFSYLAL.

As to quaternary structure, interacts with ATG8 and ATG11.

It is found in the endoplasmic reticulum membrane. It localises to the preautophagosomal structure membrane. Acts as a receptor for reticulophagy and nucleophagy. Directs autophagic sequestration of double-membrane vesicles derived from the nuclear envelope and perinuclear endoplasmic reticulum (pnER) into autophagosomes. Is not required for the cytoplasm-to-vacuole targeting pathway, mitophagy, pexophagy, and non-selective autophagy. The polypeptide is Autophagy-related protein 39 (Saccharomyces cerevisiae (strain ATCC 204508 / S288c) (Baker's yeast)).